Reading from the N-terminus, the 455-residue chain is UDP-N-acetylmuramoyl-tripeptide--D-alanyl-D-alanine ligase (455 aa).

107-113 (GSCGKTS) provides a ligand contact to ATP.

Belongs to the MurCDEF family. MurF subfamily.

It localises to the cytoplasm. It carries out the reaction D-alanyl-D-alanine + UDP-N-acetyl-alpha-D-muramoyl-L-alanyl-gamma-D-glutamyl-meso-2,6-diaminopimelate + ATP = UDP-N-acetyl-alpha-D-muramoyl-L-alanyl-gamma-D-glutamyl-meso-2,6-diaminopimeloyl-D-alanyl-D-alanine + ADP + phosphate + H(+). Its pathway is cell wall biogenesis; peptidoglycan biosynthesis. Its function is as follows. Involved in cell wall formation. Catalyzes the final step in the synthesis of UDP-N-acetylmuramoyl-pentapeptide, the precursor of murein. This Buchnera aphidicola subsp. Acyrthosiphon pisum (strain APS) (Acyrthosiphon pisum symbiotic bacterium) protein is UDP-N-acetylmuramoyl-tripeptide--D-alanyl-D-alanine ligase.